A 203-amino-acid chain; its full sequence is GTP-binding protein yptV1 (203 aa).

GTP-binding positions include 15 to 23 (GDSGVGKSC), 33 to 40 (YTESYIST), 63 to 67 (DTAGQ), 121 to 124 (NKSD), and 151 to 153 (SAK). The Effector region motif lies at 37–45 (YISTIGVDF). The interval 173–203 (MASQPVPPKPGGPVVRPTEGKPINNKSSSCC) is disordered. S-geranylgeranyl cysteine attachment occurs at residues Cys202 and Cys203.

This sequence belongs to the small GTPase superfamily. Rab family.

The protein localises to the cell membrane. Protein transport. Probably involved in vesicular traffic. The protein is GTP-binding protein yptV1 (YPTV1) of Volvox carteri (Green alga).